The primary structure comprises 156 residues: Small ribosomal subunit protein uS7 (156 aa).

The protein belongs to the universal ribosomal protein uS7 family. In terms of assembly, part of the 30S ribosomal subunit. Contacts proteins S9 and S11.

In terms of biological role, one of the primary rRNA binding proteins, it binds directly to 16S rRNA where it nucleates assembly of the head domain of the 30S subunit. Is located at the subunit interface close to the decoding center, probably blocks exit of the E-site tRNA. This chain is Small ribosomal subunit protein uS7, found in Treponema pallidum (strain Nichols).